The following is a 230-amino-acid chain: Ribonuclease 3 (230 aa).

The 123-residue stretch at 5-127 folds into the RNase III domain; it reads HEHLARKLGI…ILGAVLRDQG (123 aa). E40 is a Mg(2+) binding site. D44 is a catalytic residue. The Mg(2+) site is built by D113 and E116. E116 is a catalytic residue. The DRBM domain maps to 154–224; that stretch reads DPKTRLQELM…AENMLSRLSD (71 aa). The tract at residues 202–230 is disordered; that stretch reads GEGSSRKKAEQQAAENMLSRLSDQSRFRV.

This sequence belongs to the ribonuclease III family. As to quaternary structure, homodimer. Mg(2+) is required as a cofactor.

Its subcellular location is the cytoplasm. The catalysed reaction is Endonucleolytic cleavage to 5'-phosphomonoester.. In terms of biological role, digests double-stranded RNA. Involved in the processing of primary rRNA transcript to yield the immediate precursors to the large and small rRNAs (23S and 16S). Processes some mRNAs, and tRNAs when they are encoded in the rRNA operon. Processes pre-crRNA and tracrRNA of type II CRISPR loci if present in the organism. This is Ribonuclease 3 from Methylococcus capsulatus (strain ATCC 33009 / NCIMB 11132 / Bath).